A 218-amino-acid polypeptide reads, in one-letter code: Adenylate kinase (218 aa).

10–15 lines the ATP pocket; the sequence is GAGKGT. The NMP stretch occupies residues 30 to 59; sequence STGDMLRAAVQAQTPVGIEAKKVMDAGKLV. Residues threonine 31, arginine 36, 57-59, 85-88, and glutamine 92 contribute to the AMP site; these read KLV and GFPR. The interval 122–159 is LID; sequence GRRVHLSSGRTYHVRFNPPKKEGLDDLTGEPLVQREDD. Residues arginine 123 and 132 to 133 each bind ATP; that span reads TY. Positions 156 and 167 each coordinate AMP. Residue glycine 203 coordinates ATP.

Belongs to the adenylate kinase family. In terms of assembly, monomer.

The protein localises to the cytoplasm. The enzyme catalyses AMP + ATP = 2 ADP. The protein operates within purine metabolism; AMP biosynthesis via salvage pathway; AMP from ADP: step 1/1. In terms of biological role, catalyzes the reversible transfer of the terminal phosphate group between ATP and AMP. Plays an important role in cellular energy homeostasis and in adenine nucleotide metabolism. The polypeptide is Adenylate kinase (Chlorobium phaeobacteroides (strain DSM 266 / SMG 266 / 2430)).